The chain runs to 365 residues: Flagellar P-ring protein (365 aa).

The first 21 residues, 1–21 (MIKRIISIVFLLLTLPQLALA), serve as a signal peptide directing secretion.

Belongs to the FlgI family. The basal body constitutes a major portion of the flagellar organelle and consists of four rings (L,P,S, and M) mounted on a central rod.

It localises to the periplasm. The protein localises to the bacterial flagellum basal body. Its function is as follows. Assembles around the rod to form the L-ring and probably protects the motor/basal body from shearing forces during rotation. In Geobacter metallireducens (strain ATCC 53774 / DSM 7210 / GS-15), this protein is Flagellar P-ring protein.